The sequence spans 299 residues: Secreted LysM effector ldpB (299 aa).

The first 19 residues, 1–19, serve as a signal peptide directing secretion; the sequence is MGLTSILIAQVLFLGAANS. LysM domains lie at 46-91, 135-182, and 211-258; these read WVND…SYCV, AFYK…YVCI, and KYHK…YVCV. A glycan (N-linked (GlcNAc...) asparagine) is linked at Asn154. Positions 266 to 283 are enriched in low complexity; sequence ATATPQPTPQPQQSSSPD. Residues 266 to 288 form a disordered region; that stretch reads ATATPQPTPQPQQSSSPDQPMPQ.

The protein belongs to the secreted LysM effector family.

The protein resides in the secreted. The protein localises to the cell wall. Its subcellular location is the extracellular space. It localises to the extracellular matrix. In terms of biological role, cell wall chitin of A.fumigatus recruits lung eosinophils during infection and ldpB might have a role in sequestration of chitin and act as triggers of host immunity to dampen host defense. The protein is Secreted LysM effector ldpB of Aspergillus fumigatus (strain ATCC MYA-4609 / CBS 101355 / FGSC A1100 / Af293) (Neosartorya fumigata).